The chain runs to 1158 residues: Hephaestin (1158 aa).

An N-terminal signal peptide occupies residues Met1–Gly23. Plastocyanin-like domains follow at residues Ala24–Cys206, Gln218–Cys366, Pro370–Cys560, Lys570–Cys718, Ala731–Cys903, and His911–Glu1067. Residues Ala24–Ser1110 lie on the Extracellular side of the membrane. Na(+) is bound by residues Gly70 and Tyr73. Positions 126 and 128 each coordinate Cu(2+). Residue His126 participates in O2 binding. The Ca(2+) site is built by Lys134, Asp152, and Asp153. Asn164 carries an N-linked (GlcNAc...) asparagine glycan. A disulfide bond links Cys180 and Cys206. The Cu(2+) site is built by His186 and His188. An O2-binding site is contributed by His186. The N-linked (GlcNAc...) asparagine glycan is linked to Asn236. Ser265 serves as a coordination point for Na(+). A disulfide bridge connects residues Cys285 and Cys366. The Cu(2+) site is built by His304, Cys347, and His352. Residues Phe416, Gly425, and Tyr428 each contribute to the Na(+) site. Cys534 and Cys560 are disulfide-bonded. The N-linked (GlcNAc...) asparagine glycan is linked to Asn588. A Na(+)-binding site is contributed by Ser617. Cysteines 637 and 718 form a disulfide. Residues His656, Cys699, His704, and Met709 each coordinate Cu(2+). Residues Asn714 and Asn758 are each glycosylated (N-linked (GlcNAc...) asparagine). Na(+) contacts are provided by Phe769 and Gly778. Asn829 and Asn873 each carry an N-linked (GlcNAc...) asparagine glycan. Cys877 and Cys903 are disulfide-bonded. Asn931 carries N-linked (GlcNAc...) asparagine glycosylation. Residues His1000, His1003, His1005, His1045, Cys1046, His1047, His1051, and Met1056 each coordinate Cu(2+). Positions 1003 and 1005 each coordinate O2. Residue His1047 coordinates O2. Residues Val1111–Trp1131 form a helical membrane-spanning segment. The Cytoplasmic portion of the chain corresponds to Tyr1132–Gln1158. Phosphoserine is present on residues Ser1145, Ser1150, and Ser1155.

It belongs to the multicopper oxidase family. As to quaternary structure, part of a complex composed of SLC40A1/ferroportin, TF/transferrin and HEPH/hephaestin that transfers iron from cells to transferrin. Cu cation is required as a cofactor. Expressed by intestinal absorptive cells (at protein level). Also detected in breast, colon, bone trabecular cells and fibroblasts.

It localises to the basolateral cell membrane. The catalysed reaction is 4 Fe(2+) + O2 + 4 H(+) = 4 Fe(3+) + 2 H2O. In terms of biological role, plasma membrane ferroxidase that mediates the extracellular conversion of ferrous/Fe(2+) iron into its ferric/Fe(3+) form. Couples ferroportin which specifically exports ferrous/Fe(2+) iron from cells to transferrin that only binds and shuttles extracellular ferric/Fe(3+) iron throughout the body. By helping iron transfer from cells to blood mainly contributes to dietary iron absorption by the intestinal epithelium and more generally regulates iron levels in the body. This chain is Hephaestin, found in Homo sapiens (Human).